Reading from the N-terminus, the 578-residue chain is CTP synthase 2 (578 aa).

In terms of domain architecture, Glutamine amidotransferase type-1 spans 300–553 (SIALVGKYTK…MLAASGKLNT (254 aa)). Residues Cys-399, His-526, and Glu-528 each act as for GATase activity in the active site.

This sequence belongs to the CTP synthase family.

It catalyses the reaction UTP + L-glutamine + ATP + H2O = CTP + L-glutamate + ADP + phosphate + 2 H(+). It participates in pyrimidine metabolism; CTP biosynthesis via de novo pathway; CTP from UDP: step 2/2. In terms of biological role, catalyzes the ATP-dependent amination of UTP to CTP with either L-glutamine or ammonia as the source of nitrogen. Constitutes the rate-limiting enzyme in the synthesis of cytosine nucleotides. The protein is CTP synthase 2 (ctps2) of Xenopus laevis (African clawed frog).